A 352-amino-acid chain; its full sequence is Minor capsid protein VP2 (352 aa).

Gly-2 carries N-myristoyl glycine; by host lipidation. The segment at 273–308 (SGEFIEKTLAPGGANQRIAPQWMLPLLLGLYGTVTP) is D1. A helical membrane pass occupies residues 290–310 (IAPQWMLPLLLGLYGTVTPAL). Positions 312-352 (AYEDAPSKKKRRMSRGSSQKAKGPRASSKTSYKRRRRSTRS) are disordered. Positions 313–352 (YEDAPSKKKRRMSRGSSQKAKGPRASSKTSYKRRRRSTRS) are DNA-binding. The Nuclear localization signal signature appears at 316 to 324 (APSKKKRRM). Residues 342–352 (SYKRRRRSTRS) are compositionally biased toward basic residues.

This sequence belongs to the polyomaviruses capsid protein VP2 family. In terms of assembly, forms homooligomers, and heterooligomers with VP3 in the endoplasmic reticulum membrane. Interacts (via D1 domain) with VP1. As to quaternary structure, interacts (via D1 domain) with VP1.

The protein localises to the virion. It localises to the host nucleus. The protein resides in the host endoplasmic reticulum. Its subcellular location is the host endoplasmic reticulum membrane. Functionally, structural protein that resides within the core of the capsid surrounded by 72 VP1 pentamers. Participates in host cell receptor binding together with VP1. Following virus endocytosis and trafficking to the endoplasmic reticulum, VP2 and VP3 form oligomers and integrate into the endoplasmic reticulum membrane. Heterooligomer VP2-VP3 may create a viroporin for transporting the viral genome across the endoplasmic reticulum membrane to the cytoplasm. Nuclear entry of the viral DNA involves the selective exposure and importin recognition of VP2 or VP3 nuclear localization signal (shared C-terminus). Plays a role in virion assembly within the nucleus in particular through a DNA-binding domain located in the C-terminal region. An N-terminal myristoylation suggests a scaffold function for virion assembly. Structural protein that resides within the core of the capsid surrounded by 72 VP1 pentamers. Following virus endocytosis and trafficking to the endoplasmic reticulum, VP2 and VP3 form oligomers and integrate into the endoplasmic reticulum membrane. Heterooligomer VP2-VP3 may create a viroporin for transporting the viral genome across the endoplasmic reticulum membrane to the cytoplasm. Nuclear entry of the viral DNA involves the selective exposure and importin recognition of VP2 or VP3 nuclear localization signal (shared C-terminus). Plays a role in virion assembly within the nucleus. May participate in host cell lysis when associated with VP4. In terms of biological role, viroporin inducing perforation of cellular membranes to trigger virus progeny release. Forms pores of 3 nm inner diameter. VP4 is expressed about 24 hours after the late structural proteins and is not incorporated into the mature virion. The chain is Minor capsid protein VP2 from Simian virus 12 (strain wt100) (SV-12).